The following is a 340-amino-acid chain: GTP 3',8-cyclase (340 aa).

The Radical SAM core domain occupies 8–227; that stretch reads KLGRPIRDLR…TMIEQHFEID (220 aa). GTP is bound at residue arginine 17. Residues cysteine 24 and cysteine 28 each coordinate [4Fe-4S] cluster. S-adenosyl-L-methionine is bound at residue tyrosine 30. Cysteine 31 lines the [4Fe-4S] cluster pocket. A GTP-binding site is contributed by arginine 71. Glycine 75 provides a ligand contact to S-adenosyl-L-methionine. GTP is bound at residue threonine 102. Residue serine 126 participates in S-adenosyl-L-methionine binding. Lysine 163 contacts GTP. Residue methionine 197 participates in S-adenosyl-L-methionine binding. [4Fe-4S] cluster contacts are provided by cysteine 261 and cysteine 264. 266-268 serves as a coordination point for GTP; the sequence is RAR. Cysteine 278 is a binding site for [4Fe-4S] cluster.

The protein belongs to the radical SAM superfamily. MoaA family. As to quaternary structure, monomer and homodimer. It depends on [4Fe-4S] cluster as a cofactor.

It catalyses the reaction GTP + AH2 + S-adenosyl-L-methionine = (8S)-3',8-cyclo-7,8-dihydroguanosine 5'-triphosphate + 5'-deoxyadenosine + L-methionine + A + H(+). It participates in cofactor biosynthesis; molybdopterin biosynthesis. Functionally, catalyzes the cyclization of GTP to (8S)-3',8-cyclo-7,8-dihydroguanosine 5'-triphosphate. The sequence is that of GTP 3',8-cyclase from Staphylococcus aureus (strain MRSA252).